Here is a 400-residue protein sequence, read N- to C-terminus: Calsequestrin-2 (400 aa).

An N-terminal signal peptide occupies residues 1 to 19; that stretch reads MKRTHLFIVGVYVLSSCRA. Y282 carries the post-translational modification Phosphotyrosine. N-linked (GlcNAc...) asparagine glycosylation is present at N335. A disordered region spans residues 365–400; the sequence is VLSGKINTEDDDDEDDDDDNSDEEDNDDSDDDDDDE. Positions 373-400 are enriched in acidic residues; sequence EDDDDEDDDDDNSDEEDNDDSDDDDDDE.

The protein belongs to the calsequestrin family. As to quaternary structure, monomer, homodimer and homooligomer. Mostly monomeric in the absence of calcium. Forms higher oligomers in a calcium-dependent manner. Dimers associate to form tetramers, that then form linear homomer chains. Interacts with ASPH and TRDN. Post-translationally, phosphorylation in the C-terminus, probably by CK2, moderately increases calcium buffering capacity. N-glycosylated.

It is found in the sarcoplasmic reticulum lumen. Functionally, calsequestrin is a high-capacity, moderate affinity, calcium-binding protein and thus acts as an internal calcium store in muscle. Calcium ions are bound by clusters of acidic residues at the protein surface, especially at the interface between subunits. Can bind around 60 Ca(2+) ions. Regulates the release of lumenal Ca(2+) via the calcium release channel RYR2; this plays an important role in triggering muscle contraction. Plays a role in excitation-contraction coupling in the heart and in regulating the rate of heart beats. The protein is Calsequestrin-2 (CASQ2) of Pongo abelii (Sumatran orangutan).